The sequence spans 156 residues: Ribonuclease H (156 aa).

One can recognise an RNase H type-1 domain in the interval 2 to 144 (TMKNVQAFTD…CDVLARTQAS (143 aa)). 4 residues coordinate Mg(2+): aspartate 11, glutamate 49, aspartate 71, and aspartate 136.

Belongs to the RNase H family. Monomer. Mg(2+) is required as a cofactor.

It localises to the cytoplasm. The catalysed reaction is Endonucleolytic cleavage to 5'-phosphomonoester.. Its function is as follows. Endonuclease that specifically degrades the RNA of RNA-DNA hybrids. The chain is Ribonuclease H from Nitratidesulfovibrio vulgaris (strain DSM 19637 / Miyazaki F) (Desulfovibrio vulgaris).